The primary structure comprises 159 residues: Large ribosomal subunit protein uL15 (159 aa).

Residues 1–46 (MKLNELSPSVPKKNRKRIGRGNSSGWGKTAGKGSNGQNSRAGGGVK) form a disordered region. Gly residues predominate over residues 22-34 (NSSGWGKTAGKGS).

This sequence belongs to the universal ribosomal protein uL15 family. In terms of assembly, part of the 50S ribosomal subunit.

In terms of biological role, binds to the 23S rRNA. The chain is Large ribosomal subunit protein uL15 from Fusobacterium nucleatum subsp. nucleatum (strain ATCC 25586 / DSM 15643 / BCRC 10681 / CIP 101130 / JCM 8532 / KCTC 2640 / LMG 13131 / VPI 4355).